The primary structure comprises 1082 residues: Error-prone DNA polymerase (1082 aa).

The protein belongs to the DNA polymerase type-C family. DnaE2 subfamily.

It is found in the cytoplasm. It catalyses the reaction DNA(n) + a 2'-deoxyribonucleoside 5'-triphosphate = DNA(n+1) + diphosphate. Its function is as follows. DNA polymerase involved in damage-induced mutagenesis and translesion synthesis (TLS). It is not the major replicative DNA polymerase. The sequence is that of Error-prone DNA polymerase from Xanthomonas campestris pv. campestris (strain B100).